The chain runs to 725 residues: MEVTNLIEKCTKHSKDFATEVKKLWNDELSSESGLSRKTRNVIRNILRDITKSLTTDKKSKCFRILERSTINGEQIKDVYKTIFNNGVDVESRINTTGKYVLFTVMTYVAAELRLIKSDEIFALLSRFFNMICDIHRKYGCGNMFVGIPAALIILLEIDHINKLFSVFSTRYDAKAYLYTEYFLFLNINHYLLSGSDLFINVAYGAVSFSSPISVPDYIMEALTFKACDHIMKSGDLKYTYAFTKKVKDLFNTKSDSIYQYVRLHEMSYDGVSEDTDDDDEVFAILNLSIDSSVDRYRNRVLLLTPEVASLRKEYSDVEPDYKYLMDEEVPAYDKHLPKPITNTGIEEPHATGGDEDQPIKVVHPPNNDKDDAIKPYNPLEDPNYVPTITRTAIGIADYQLVINKLIEWLDKCEEECGNSGEFKTELEEAKRKLTELNAELSDKLSKIRTLERDSVYKTERIDRLTKEIKEHRDIQNGTDDGSDLLEIDKKTIRELRESLDREREMRSELEKELDTIRNGKVDGSCQRELELSRMWLKQRDDDLRAEIDKRRNVEWELSRLRRDIKECDKYKEDLDKAKTTISNYVSKISTLESEIAKYQQDRDTLSVVRRELEEERRRVRDLESRLDECTRNQEDTQEVDALRSRIRELENKLTDCIESGGGNLTEISRLQSKISDLERQLSECRENATEISRLQSRISDLERQLNDCRRNNETNAETERDATS.

2 coiled-coil regions span residues 418-521 (GNSG…RNGK) and 547-719 (EIDK…NAET). Tandem repeats lie at residues 609-635 (VRRE…RNQE), 636-663 (DTQE…SGGG), 664-687 (NLTE…ECRE), and 699-725 (ISDL…DATS). A 4 X approximate tandem repeats region spans residues 609–718 (VRRELEEERR…CRRNNETNAE (110 aa)).

It belongs to the poxviridae A25 protein family. In terms of assembly, interacts (via N-terminus) with protein A26.

Its subcellular location is the virion. Its function is as follows. Structural protein that forms a matrix surrounding the mature virion (MV) through interaction with protein A26. Presence of protein A25 in the virion structurally prevents direct virus-cell fusion mechanism. This is A-type inclusion protein A25 from Vaccinia virus (strain Western Reserve) (VACV).